The primary structure comprises 205 residues: Glycerol-3-phosphate acyltransferase (205 aa).

A run of 4 helical transmembrane segments spans residues 4–24 (IAPG…AILV), 80–100 (PFWL…PIFF), 112–132 (FGAI…TWLL), and 138–158 (GYSS…VWWF).

It belongs to the PlsY family. In terms of assembly, probably interacts with PlsX.

Its subcellular location is the cell inner membrane. It carries out the reaction an acyl phosphate + sn-glycerol 3-phosphate = a 1-acyl-sn-glycero-3-phosphate + phosphate. It functions in the pathway lipid metabolism; phospholipid metabolism. Its function is as follows. Catalyzes the transfer of an acyl group from acyl-phosphate (acyl-PO(4)) to glycerol-3-phosphate (G3P) to form lysophosphatidic acid (LPA). This enzyme utilizes acyl-phosphate as fatty acyl donor, but not acyl-CoA or acyl-ACP. The sequence is that of Glycerol-3-phosphate acyltransferase from Cronobacter sakazakii (strain ATCC BAA-894) (Enterobacter sakazakii).